Reading from the N-terminus, the 317-residue chain is MRSYLDFEKPVAELEAKIDELRTLNAQEDTPAIGEELTKLEAKAQKALGDLYASLTPWQKTQVARHPQRPHFVDFVQGFIDDFTPLSGDRKFGDDAAIIGGFGWFEGQSICVIGQEKGADTESRIKHNFGLARPEGYRKAVRLMELADRFGVPVLSLVDTAGAFPGVDAEERGQAEAIARGTDACLSLGVPNIAVILGEGGSGGAIAIAACNTVLMLENAIYTVASPEASASILWRDATRAQDAAMSMKITAQDLLKFGIIDKIVPEPLGGAHRDSSTTIVAVKEAVVEALGALRDLSPSEVRRVRREKFLGMGRKL.

The CoA carboxyltransferase C-terminal domain maps to 39–293 (KLEAKAQKAL…KEAVVEALGA (255 aa)).

It belongs to the AccA family. Acetyl-CoA carboxylase is a heterohexamer composed of biotin carboxyl carrier protein (AccB), biotin carboxylase (AccC) and two subunits each of ACCase subunit alpha (AccA) and ACCase subunit beta (AccD).

It localises to the cytoplasm. The enzyme catalyses N(6)-carboxybiotinyl-L-lysyl-[protein] + acetyl-CoA = N(6)-biotinyl-L-lysyl-[protein] + malonyl-CoA. The protein operates within lipid metabolism; malonyl-CoA biosynthesis; malonyl-CoA from acetyl-CoA: step 1/1. In terms of biological role, component of the acetyl coenzyme A carboxylase (ACC) complex. First, biotin carboxylase catalyzes the carboxylation of biotin on its carrier protein (BCCP) and then the CO(2) group is transferred by the carboxyltransferase to acetyl-CoA to form malonyl-CoA. The protein is Acetyl-coenzyme A carboxylase carboxyl transferase subunit alpha of Beijerinckia indica subsp. indica (strain ATCC 9039 / DSM 1715 / NCIMB 8712).